Reading from the N-terminus, the 267-residue chain is tRNA pseudouridine synthase A (267 aa).

Asp53 serves as the catalytic Nucleophile. A substrate-binding site is contributed by Tyr114.

It belongs to the tRNA pseudouridine synthase TruA family. In terms of assembly, homodimer.

The catalysed reaction is uridine(38/39/40) in tRNA = pseudouridine(38/39/40) in tRNA. In terms of biological role, formation of pseudouridine at positions 38, 39 and 40 in the anticodon stem and loop of transfer RNAs. This is tRNA pseudouridine synthase A from Chlamydia trachomatis serovar L2b (strain UCH-1/proctitis).